The following is a 444-amino-acid chain: Prenyltransferase phnF (444 aa).

It belongs to the tryptophan dimethylallyltransferase family.

It carries out the reaction 2,3,4,7,9-pentahydroxy-6-methyl-1H-phenalen-1-one + dimethylallyl diphosphate = 2,4,7,9-tetrahydroxy-6-methyl-8-(2-methylbut-3-en-2-yl)-1-oxo-1H-phenalen-3-ol + diphosphate. It participates in secondary metabolite biosynthesis. Its function is as follows. Prenyltransferase; part of the gene cluster that mediates the biosynthesis of phenalenones such as herqueinone, compounds that have been reported to treat tumors, bacterial infections and/or mycoses, and rheumatic diseases. The non-reducing polyketide synthase phnA synthesizes the heptaketide backbone and cyclizes it into the angular, hemiketal-containing naphtho-gamma-pyrone prephenalenone. The product template (PT) domain of phnA catalyzes only the C4-C9 aldol condensation, which is unprecedented among known PT domains. The transformation of prephenalenone to phenalenones requires an FAD-dependent monooxygenase phnB, which catalyzes the C2 aromatic hydroxylation of prephenalenone and ring opening of the gamma-pyrone ring simultaneously. Subsequent intramolecular deprotonation of C3 phenolic oxygen accelerates phenalenone ring closure to yield the tricyclic phenalenone core with a C2 hydroxylation. The prenyltransferase phnF further catalyzes reverse C-prenylation of phenalenone by direct electrophilic substitution at C6, or possibly via first a forward O-prenylation of a neighboring phenol in phenalenone, followed by a Claisen rearrangement. The hydroalkoxylation enzyme phnH catalyzes the 5-exo-trig cyclization via acid catalysis after the spontaneous deprotonation of 7-OH, which leads to the formation of the dihydrobenzofuran atrovenetin. Atrovenetin is further converted to deoxyherqueinone by the O-methyltransferase phnC which can methylate C2-OH to stabilize the northern portion of the phenalenone core. Finally, the oxidoreductase phnG converts deoxyherqueinone to herqueinone via C6 hydroxylation. In Penicillium herquei, this protein is Prenyltransferase phnF.